The sequence spans 85 residues: Omega-conotoxin-like Am6.5 (85 aa).

A signal peptide spans 1–19 (MCILIVAVLFLTAWTFVMA). Residues 20 to 53 (DDPRDEPDTVVRGGKLFSRARDEMNPAASKLNER) constitute a propeptide that is removed on maturation. Disulfide bonds link cysteine 55/cysteine 73, cysteine 62/cysteine 77, and cysteine 72/cysteine 81. Glutamine 84 is modified (glutamine amide).

The protein belongs to the conotoxin O1 family. In terms of processing, is not hydroxylated. Expressed by the venom duct.

The protein localises to the secreted. Functionally, omega-conotoxins act at presynaptic membranes, they bind and block voltage-gated calcium channels (Cav). The polypeptide is Omega-conotoxin-like Am6.5 (Conus amadis (Amadis cone)).